The sequence spans 281 residues: Putative dehydrogenase/reductase SDR family member 4-like 1 (281 aa).

36 to 60 (LVTASTDWIGFAVAQRLAQDGAHVV) contributes to the NADP(+) binding site. Ser-172 is a binding site for substrate. Residue Tyr-185 is the Proton acceptor of the active site. Residue Lys-189 coordinates NADP(+). The Peroxisomal targeting signal signature appears at 279-281 (SRL).

This sequence belongs to the short-chain dehydrogenases/reductases (SDR) family.

Putative oxidoreductase. This chain is Putative dehydrogenase/reductase SDR family member 4-like 1, found in Homo sapiens (Human).